The primary structure comprises 251 residues: Triosephosphate isomerase (251 aa).

Residue 9–11 coordinates substrate; the sequence is NWK. His-94 functions as the Electrophile in the catalytic mechanism. Glu-166 acts as the Proton acceptor in catalysis. Residues Gly-172, Ser-211, and 232–233 contribute to the substrate site; that span reads GG.

It belongs to the triosephosphate isomerase family. Homodimer.

It is found in the cytoplasm. It carries out the reaction D-glyceraldehyde 3-phosphate = dihydroxyacetone phosphate. It functions in the pathway carbohydrate biosynthesis; gluconeogenesis. Its pathway is carbohydrate degradation; glycolysis; D-glyceraldehyde 3-phosphate from glycerone phosphate: step 1/1. Its function is as follows. Involved in the gluconeogenesis. Catalyzes stereospecifically the conversion of dihydroxyacetone phosphate (DHAP) to D-glyceraldehyde-3-phosphate (G3P). In Xanthomonas oryzae pv. oryzae (strain MAFF 311018), this protein is Triosephosphate isomerase.